Consider the following 941-residue polypeptide: Coiled-coil domain-containing protein 39 (941 aa).

Coiled-coil stretches lie at residues 16-122 (AIPV…ENGI), 164-273 (AQQD…ESEI), 306-605 (QLKG…EIKV), and 665-825 (IKAA…EEQD). The segment at 868–941 (PTASTKGSRQ…SNVKSKKSSK (74 aa)) is disordered. Composition is skewed to low complexity over residues 871 to 903 (STKG…SQSS) and 914 to 934 (SSSL…SSNV). Phosphoserine is present on residues serine 892 and serine 900.

The protein belongs to the CCDC39 family. In terms of tissue distribution, mainly expressed in nasal brushings and, to a lesser extent, in lungs and testis.

It localises to the cytoplasm. The protein resides in the cytoskeleton. The protein localises to the cilium axoneme. Required for assembly of dynein regulatory complex (DRC) and inner dynein arm (IDA) complexes, which are responsible for ciliary beat regulation, thereby playing a central role in motility in cilia and flagella. Probably acts together with CCDC40 to form a molecular ruler that determines the 96 nanometer (nm) repeat length and arrangements of components in cilia and flagella. Not required for outer dynein arm complexes assembly. The protein is Coiled-coil domain-containing protein 39 of Homo sapiens (Human).